Reading from the N-terminus, the 497-residue chain is Probable malate:quinone oxidoreductase (497 aa).

Belongs to the MQO family. The cofactor is FAD.

It carries out the reaction (S)-malate + a quinone = a quinol + oxaloacetate. It participates in carbohydrate metabolism; tricarboxylic acid cycle; oxaloacetate from (S)-malate (quinone route): step 1/1. This is Probable malate:quinone oxidoreductase from Tolumonas auensis (strain DSM 9187 / NBRC 110442 / TA 4).